The sequence spans 211 residues: Pyridoxine/pyridoxamine 5'-phosphate oxidase (211 aa).

Substrate contacts are provided by residues 7 to 10 (RRDY) and Lys-65. FMN is bound by residues 60-65 (RIVLLK), 75-76 (YT), Arg-81, Lys-82, and Gln-104. Substrate-binding residues include Tyr-122, Arg-126, and Ser-130. Residues 139–140 (QS) and Trp-184 contribute to the FMN site. Substrate is bound at residue 190–192 (RLH). Arg-194 serves as a coordination point for FMN.

It belongs to the pyridoxamine 5'-phosphate oxidase family. As to quaternary structure, homodimer. FMN serves as cofactor.

The catalysed reaction is pyridoxamine 5'-phosphate + O2 + H2O = pyridoxal 5'-phosphate + H2O2 + NH4(+). It catalyses the reaction pyridoxine 5'-phosphate + O2 = pyridoxal 5'-phosphate + H2O2. The protein operates within cofactor metabolism; pyridoxal 5'-phosphate salvage; pyridoxal 5'-phosphate from pyridoxamine 5'-phosphate: step 1/1. It participates in cofactor metabolism; pyridoxal 5'-phosphate salvage; pyridoxal 5'-phosphate from pyridoxine 5'-phosphate: step 1/1. Catalyzes the oxidation of either pyridoxine 5'-phosphate (PNP) or pyridoxamine 5'-phosphate (PMP) into pyridoxal 5'-phosphate (PLP). This is Pyridoxine/pyridoxamine 5'-phosphate oxidase from Aliivibrio salmonicida (strain LFI1238) (Vibrio salmonicida (strain LFI1238)).